The following is a 102-amino-acid chain: Putative pterin-4-alpha-carbinolamine dehydratase (102 aa).

This sequence belongs to the pterin-4-alpha-carbinolamine dehydratase family.

It carries out the reaction (4aS,6R)-4a-hydroxy-L-erythro-5,6,7,8-tetrahydrobiopterin = (6R)-L-erythro-6,7-dihydrobiopterin + H2O. This Burkholderia cenocepacia (strain ATCC BAA-245 / DSM 16553 / LMG 16656 / NCTC 13227 / J2315 / CF5610) (Burkholderia cepacia (strain J2315)) protein is Putative pterin-4-alpha-carbinolamine dehydratase.